Reading from the N-terminus, the 284-residue chain is 2,3,4,5-tetrahydropyridine-2,6-dicarboxylate N-succinyltransferase (284 aa).

2 residues coordinate substrate: R111 and D148.

It belongs to the transferase hexapeptide repeat family. In terms of assembly, homotrimer.

The protein resides in the cytoplasm. The enzyme catalyses (S)-2,3,4,5-tetrahydrodipicolinate + succinyl-CoA + H2O = (S)-2-succinylamino-6-oxoheptanedioate + CoA. It participates in amino-acid biosynthesis; L-lysine biosynthesis via DAP pathway; LL-2,6-diaminopimelate from (S)-tetrahydrodipicolinate (succinylase route): step 1/3. The protein is 2,3,4,5-tetrahydropyridine-2,6-dicarboxylate N-succinyltransferase of Agrobacterium fabrum (strain C58 / ATCC 33970) (Agrobacterium tumefaciens (strain C58)).